Reading from the N-terminus, the 308-residue chain is Porphobilinogen deaminase (308 aa).

Residue cysteine 240 is modified to S-(dipyrrolylmethanemethyl)cysteine.

It belongs to the HMBS family. As to quaternary structure, monomer. The cofactor is dipyrromethane.

The enzyme catalyses 4 porphobilinogen + H2O = hydroxymethylbilane + 4 NH4(+). It functions in the pathway porphyrin-containing compound metabolism; protoporphyrin-IX biosynthesis; coproporphyrinogen-III from 5-aminolevulinate: step 2/4. Functionally, tetrapolymerization of the monopyrrole PBG into the hydroxymethylbilane pre-uroporphyrinogen in several discrete steps. This Campylobacter lari (strain RM2100 / D67 / ATCC BAA-1060) protein is Porphobilinogen deaminase.